The sequence spans 336 residues: Dihydroorotate dehydrogenase (quinone) (336 aa).

FMN contacts are provided by residues 62–66 and Thr-86; that span reads AGLDK. Residue Lys-66 coordinates substrate. 111 to 115 is a substrate binding site; the sequence is NRMGF. Asn-139 and Asn-172 together coordinate FMN. Asn-172 is a binding site for substrate. The Nucleophile role is filled by Ser-175. Asn-177 provides a ligand contact to substrate. FMN-binding residues include Lys-217 and Thr-245. 246–247 contacts substrate; that stretch reads NT. FMN-binding positions include Gly-268, Gly-297, and 318–319; that span reads YS.

It belongs to the dihydroorotate dehydrogenase family. Type 2 subfamily. Monomer. Requires FMN as cofactor.

The protein localises to the cell membrane. It catalyses the reaction (S)-dihydroorotate + a quinone = orotate + a quinol. The protein operates within pyrimidine metabolism; UMP biosynthesis via de novo pathway; orotate from (S)-dihydroorotate (quinone route): step 1/1. In terms of biological role, catalyzes the conversion of dihydroorotate to orotate with quinone as electron acceptor. This Escherichia coli O17:K52:H18 (strain UMN026 / ExPEC) protein is Dihydroorotate dehydrogenase (quinone).